Here is an 805-residue protein sequence, read N- to C-terminus: Sucrose synthase (805 aa).

A GT-B glycosyltransferase region spans residues 275 to 752 (MVFNVVILSP…GLKRIEEKYT (478 aa)).

This sequence belongs to the glycosyltransferase 1 family. Plant sucrose synthase subfamily. As to expression, expression is at least 10-fold higher in tubers compared to photosynthetically active tissues.

The enzyme catalyses an NDP-alpha-D-glucose + D-fructose = a ribonucleoside 5'-diphosphate + sucrose + H(+). Its function is as follows. Sucrose-cleaving enzyme that provides UDP-glucose and fructose for various metabolic pathways. In Solanum tuberosum (Potato), this protein is Sucrose synthase.